Here is a 466-residue protein sequence, read N- to C-terminus: Hydroxyacid-oxoacid transhydrogenase, mitochondrial (466 aa).

N6-acetyllysine is present on K444. A Phosphoserine modification is found at S451.

The protein belongs to the iron-containing alcohol dehydrogenase family. Hydroxyacid-oxoacid transhydrogenase subfamily.

It is found in the mitochondrion. The catalysed reaction is (S)-3-hydroxybutanoate + 2-oxoglutarate = (R)-2-hydroxyglutarate + acetoacetate. The enzyme catalyses 4-hydroxybutanoate + 2-oxoglutarate = (R)-2-hydroxyglutarate + succinate semialdehyde. Catalyzes the cofactor-independent reversible oxidation of gamma-hydroxybutyrate (GHB) to succinic semialdehyde (SSA) coupled to reduction of 2-ketoglutarate (2-KG) to D-2-hydroxyglutarate (D-2-HG). L-3-hydroxybutyrate (L-3-OHB) is also a substrate for HOT when using 2-KG as hydrogen acceptor, resulting in the formation of D-2-HG. This is Hydroxyacid-oxoacid transhydrogenase, mitochondrial (ADHFE1) from Bos taurus (Bovine).